A 511-amino-acid chain; its full sequence is Steroid 17-alpha-hydroxylase/17,20 lyase (511 aa).

Cys-442 provides a ligand contact to heme.

The protein belongs to the cytochrome P450 family. Heme is required as a cofactor.

Its subcellular location is the endoplasmic reticulum membrane. The protein localises to the microsome membrane. The enzyme catalyses a C21-steroid + reduced [NADPH--hemoprotein reductase] + O2 = a 17alpha-hydroxy-C21-steroid + oxidized [NADPH--hemoprotein reductase] + H2O + H(+). The catalysed reaction is progesterone + reduced [NADPH--hemoprotein reductase] + O2 = 17alpha-hydroxyprogesterone + oxidized [NADPH--hemoprotein reductase] + H2O + H(+). It catalyses the reaction pregnenolone + reduced [NADPH--hemoprotein reductase] + O2 = 17alpha-hydroxypregnenolone + oxidized [NADPH--hemoprotein reductase] + H2O + H(+). It carries out the reaction 17alpha-hydroxyprogesterone + reduced [NADPH--hemoprotein reductase] + O2 = androst-4-ene-3,17-dione + acetate + oxidized [NADPH--hemoprotein reductase] + H2O + 2 H(+). The enzyme catalyses 17alpha-hydroxyprogesterone + reduced [NADPH--hemoprotein reductase] + O2 = 16alpha,17alpha-dihydroxyprogesterone + oxidized [NADPH--hemoprotein reductase] + H2O + H(+). The catalysed reaction is 16alpha,17alpha-dihydroxyprogesterone + reduced [NADPH--hemoprotein reductase] + O2 = 6beta,16alpha,17alpha-trihydroxyprogesterone + oxidized [NADPH--hemoprotein reductase] + H2O + H(+). It catalyses the reaction 17alpha-hydroxypregnenolone + reduced [NADPH--hemoprotein reductase] + O2 = 3beta-hydroxyandrost-5-en-17-one + acetate + oxidized [NADPH--hemoprotein reductase] + H2O + 2 H(+). It carries out the reaction 16alpha,17alpha-dihydroxypregnenolone + reduced [NADPH--hemoprotein reductase] + O2 = 3beta,16alpha-dihydroxy-androst-5-en-17-one + acetate + oxidized [NADPH--hemoprotein reductase] + H2O + 2 H(+). The enzyme catalyses 3beta-hydroxyandrost-5-en-17-one + reduced [NADPH--hemoprotein reductase] + O2 = 3beta,16alpha-dihydroxy-androst-5-en-17-one + oxidized [NADPH--hemoprotein reductase] + H2O + H(+). The catalysed reaction is androst-4-ene-3,17-dione + reduced [NADPH--hemoprotein reductase] + O2 = 16alpha-hydroxyandrost-4-ene-3,17-dione + oxidized [NADPH--hemoprotein reductase] + H2O + H(+). Its pathway is steroid hormone biosynthesis. It functions in the pathway steroid biosynthesis; glucocorticoid biosynthesis. Its activity is regulated as follows. Regulated predominantly by intracellular cAMP levels. The 17,20-lyase activity is stimulated by cytochrome b5, which acts as an allosteric effector increasing the Vmax of the lyase activity. Functionally, a cytochrome P450 monooxygenase involved in corticoid and androgen biosynthesis. Catalyzes 17-alpha hydroxylation of C21 steroids, which is common for both pathways. A second oxidative step, required only for androgen synthesis, involves an acyl-carbon cleavage. The 17-alpha hydroxy intermediates, as part of adrenal glucocorticoids biosynthesis pathway, are precursors of cortisol. Hydroxylates steroid hormones, pregnenolone and progesterone to form 17-alpha hydroxy metabolites, followed by the cleavage of the C17-C20 bond to form C19 steroids, dehydroepiandrosterone (DHEA) and androstenedione. Has 16-alpha hydroxylase activity. Catalyzes 16-alpha hydroxylation of 17-alpha hydroxy pregnenolone, followed by the cleavage of the C17-C20 bond to form 16-alpha-hydroxy DHEA. Also 16-alpha hydroxylates androgens, relevant for estriol synthesis. Mechanistically, uses molecular oxygen inserting one oxygen atom into a substrate, and reducing the second into a water molecule, with two electrons provided by NADPH via cytochrome P450 reductase (CPR; NADPH-ferrihemoprotein reductase). This Mesocricetus auratus (Golden hamster) protein is Steroid 17-alpha-hydroxylase/17,20 lyase (CYP17A1).